A 689-amino-acid polypeptide reads, in one-letter code: Ataxin-1-like (689 aa).

Over residues 1-19 (MKPVHERSQECLPPKKRDL) the composition is skewed to basic and acidic residues. 3 disordered regions span residues 1-46 (MKPV…SEWS), 185-223 (ATPP…LDLA), and 242-297 (LHET…GEGQ). The interval 20–197 (PVTSEDMGRT…PPQAPSPAHS (178 aa)) is interaction with NCOR2 and ATXN1. Residues 20 to 197 (PVTSEDMGRT…PPQAPSPAHS (178 aa)) form a self-association region. Polar residues-rich tracts occupy residues 28–43 (RTTS…SDAS) and 200–219 (KAPS…STQP). Low complexity predominate over residues 257–268 (QESQSALEAAAA). Residues 273–285 (RPRERNLVRRESE) are compositionally biased toward basic and acidic residues. S284 is modified (phosphoserine). A Phosphothreonine modification is found at T330. The interval 357–405 (KEEPSPLNLSHHTPDHQGEGRGSARNPAELAEKSQARGFYPQSHQEPVK) is disordered. A Phosphoserine modification is found at S361. An AXH domain is found at 457 to 588 (PPPITSSHLP…SISLQSLNSN (132 aa)). S615 is modified (phosphoserine). Residues 617–647 (ELCDSEGKSQPAGEGSRVVEPSQPESGAQAC) are disordered.

The protein belongs to the ATXN1 family. In terms of assembly, homodimer. Interacts with CIC. Interacts (via AXH domain) with NCOR2. Interacts with ATXN1. Directly interacts with RBPJ; this interaction is disrupted in the presence of Notch intracellular domain. Competes with ATXN1 for RBPJ-binding. Found in a complex with CIC and ATXN1. As to expression, expressed in cerebellum and cerebral cortex.

The protein localises to the nucleus. It is found in the cell projection. The protein resides in the dendrite. Functionally, chromatin-binding factor that repress Notch signaling in the absence of Notch intracellular domain by acting as a CBF1 corepressor. Binds to the HEY promoter and might assist, along with NCOR2, RBPJ-mediated repression. Can suppress ATXN1 cytotoxicity in spinocerebellar ataxia type 1 (SCA1). In concert with CIC and ATXN1, involved in brain development. The sequence is that of Ataxin-1-like (ATXN1L) from Homo sapiens (Human).